A 364-amino-acid chain; its full sequence is MDYDSYQHYFYDYDCGEDFYRSTAPSEDIWKKFELVPSPPTSPPWGLGPGAGDPAPGIGPPEPWPGGCTGDEAESRGHSKGWGRNYASIIRRDCMWSGFSARERLERAVSDRLAPGAPRGNPPKASAAPDCTPSLEAGNPAPAAPCPLGEPKTQACSGSESPSDSENEEIDVVTVEKRQSLGIRKPVTITVRADPLDPCMKHFHISIHQQQHNYAARFPPESCSQEEASERGPQEEVLERDAAGEKEDEEDEEIVSPPPVESEAAQSCHPKPVSSDTEDVTKRKNHNFLERKRRNDLRSRFLALRDQVPTLASCSKAPKVVILSKALEYLQALVGAEKRMATEKRQLRCRQQQLQKRIAYLTGY.

Disordered stretches follow at residues 41-81 (TSPP…HSKG), 111-172 (DRLA…EIDV), and 219-285 (PPES…KRKN). Positions 228 to 245 (ASERGPQEEVLERDAAGE) are enriched in basic and acidic residues. Positions 281 to 333 (TKRKNHNFLERKRRNDLRSRFLALRDQVPTLASCSKAPKVVILSKALEYLQAL) constitute a bHLH domain. The segment at 333–361 (LVGAEKRMATEKRQLRCRQQQLQKRIAYL) is leucine-zipper.

In terms of assembly, efficient DNA binding requires dimerization with another bHLH protein. Binds DNA as a heterodimer with MAX.

The protein resides in the nucleus. The protein is Protein L-Myc (MYCL) of Homo sapiens (Human).